The following is a 76-amino-acid chain: Protein sigN132 (76 aa).

The span at 1–13 (MLFESISTLSNLK) shows a compositional bias: polar residues. Residues 1–33 (MLFESISTLSNLKSASKSSMIASTGSTSSKSSN) are disordered. Residues 14–33 (SASKSSMIASTGSTSSKSSN) are compositionally biased toward low complexity.

The polypeptide is Protein sigN132 (Dictyostelium discoideum (Social amoeba)).